We begin with the raw amino-acid sequence, 548 residues long: Lysine--tRNA ligase (548 aa).

Residues 52 to 60 carry the 'HIGH' region motif; the sequence is PSGLPHIGT. The short motif at 300-304 is the 'KMSKS' region element; it reads KISKS. Lysine 303 lines the ATP pocket.

This sequence belongs to the class-I aminoacyl-tRNA synthetase family.

The protein localises to the cytoplasm. It catalyses the reaction tRNA(Lys) + L-lysine + ATP = L-lysyl-tRNA(Lys) + AMP + diphosphate. The polypeptide is Lysine--tRNA ligase (Mesorhizobium japonicum (strain LMG 29417 / CECT 9101 / MAFF 303099) (Mesorhizobium loti (strain MAFF 303099))).